Consider the following 461-residue polypeptide: Trimethylamine monooxygenase (461 aa).

Residues Ser14, Glu39, Lys40, Gln41, Met47, Trp48, and His64 each contribute to the FAD site. Trp72 and Asn74 together coordinate NADP(+). 2 residues coordinate FAD: Asn74 and Ala127. NADP(+)-binding residues include Ser206, Ser207, Ser209, Arg230, and Thr231. Residues Gln319 and Thr322 each contribute to the FAD site. Arg413 is an NADP(+) binding site.

The protein belongs to the FMO family. It depends on FAD as a cofactor.

It catalyses the reaction trimethylamine + NADPH + O2 = trimethylamine N-oxide + NADP(+) + H2O. Functionally, catalyzes the oxidation of trimethylamine (TMA) to produce trimethylamine N-oxide (TMAO). The produced TMAO is accumulated in the cell, functioning as a piezolyte, improving both growth and survival at high hydrostatic pressure (HHP). The polypeptide is Trimethylamine monooxygenase (Myroides profundi).